A 64-amino-acid chain; its full sequence is Copper-specific metallothionein-2 (64 aa).

The Cu(+) site is built by cysteine 3, cysteine 5, cysteine 9, cysteine 11, cysteine 16, cysteine 18, cysteine 22, cysteine 24, cysteine 27, cysteine 33, cysteine 40, cysteine 44, cysteine 50, cysteine 52, cysteine 56, and cysteine 58.

Belongs to the metallothionein superfamily. Type 2 family.

In terms of biological role, the metallothioneins are involved in the cellular sequestration of toxic metal ions and regulation of essential trace elements. This isoform binds exclusively copper. This is Copper-specific metallothionein-2 from Callinectes sapidus (Blue crab).